Consider the following 478-residue polypeptide: UDP-N-acetylmuramate--L-alanine ligase (478 aa).

125-131 (GTHGKTT) serves as a coordination point for ATP.

Belongs to the MurCDEF family.

The protein resides in the cytoplasm. It catalyses the reaction UDP-N-acetyl-alpha-D-muramate + L-alanine + ATP = UDP-N-acetyl-alpha-D-muramoyl-L-alanine + ADP + phosphate + H(+). Its pathway is cell wall biogenesis; peptidoglycan biosynthesis. In terms of biological role, cell wall formation. The polypeptide is UDP-N-acetylmuramate--L-alanine ligase (Dichelobacter nodosus (strain VCS1703A)).